The primary structure comprises 236 residues: Ribosome-inactivating protein saporin-3 (236 aa).

Residue glutamate 148 is part of the active site.

Belongs to the ribosome-inactivating protein family. Type 1 RIP subfamily.

It catalyses the reaction Endohydrolysis of the N-glycosidic bond at one specific adenosine on the 28S rRNA.. In terms of biological role, ribosome-inactivating protein of type 1, inhibits protein synthesis in animal cells. Useful as immunotoxin for pharmacological applications. This chain is Ribosome-inactivating protein saporin-3 (SAP3), found in Saponaria officinalis (Common soapwort).